The primary structure comprises 422 residues: 3-carboxy-cis,cis-muconate cycloisomerase (422 aa).

This sequence belongs to the class-II fumarase/aspartase family. As to quaternary structure, homotetramer.

Its subcellular location is the cytoplasm. It carries out the reaction 2-(carboxymethyl)-5-oxo-2,5-dihydro-2-furoate = 3-carboxy-cis,cis-muconate + H(+). The protein operates within aromatic compound metabolism; beta-ketoadipate pathway; 5-oxo-4,5-dihydro-2-furylacetate from 3-carboxy-cis,cis-muconate: step 1/2. Functionally, catalyzes an anti cycloisomerization. The polypeptide is 3-carboxy-cis,cis-muconate cycloisomerase (pcaB) (Pseudomonas putida (Arthrobacter siderocapsulatus)).